Reading from the N-terminus, the 46-residue chain is GTP cyclohydrolase 1 (46 aa).

Cys7 is a binding site for Zn(2+).

The protein belongs to the GTP cyclohydrolase I family. As to quaternary structure, homomer.

It catalyses the reaction GTP + H2O = 7,8-dihydroneopterin 3'-triphosphate + formate + H(+). It participates in cofactor biosynthesis; 7,8-dihydroneopterin triphosphate biosynthesis; 7,8-dihydroneopterin triphosphate from GTP: step 1/1. The chain is GTP cyclohydrolase 1 (folE) from Bacillus pumilus (Bacillus mesentericus).